The following is a 359-amino-acid chain: Probable 2-oxoacid dependent dioxygenase (359 aa).

Residues 207–308 (KGLWMLCHCF…ISVACFFVHT (102 aa)) form the Fe2OG dioxygenase domain. Residues His231, Asp233, and His287 each contribute to the Fe cation site. A disordered region spans residues 329–359 (PPKYRDTTSESSNHYVARKPNGNSSLDHLRI). The segment covering 349–359 (NGNSSLDHLRI) has biased composition (polar residues).

Belongs to the iron/ascorbate-dependent oxidoreductase family. It depends on Fe(2+) as a cofactor. As to expression, expressed in leaves and seeds. All cultivars with seed-only-functional allele have low to non-detectable GSL-OH expression in the leaves.

It catalyses the reaction gluconapin + AH2 + O2 = progoitrin + A + H2O. Necessary for the hydroxylation of but-3-enyl glucosinolate to 2-hydroxybut-3-enyl glucosinolate, which is toxic to insects, bacteria and nematodes, inhibits seed germination and produces bitter flavors. The protein is Probable 2-oxoacid dependent dioxygenase of Arabidopsis thaliana (Mouse-ear cress).